Reading from the N-terminus, the 59-residue chain is Large ribosomal subunit protein bL32 (59 aa).

The interval 1-20 (MAVPRNRHSNARKNIRRSHH) is disordered.

It belongs to the bacterial ribosomal protein bL32 family.

In Chlamydia trachomatis serovar A (strain ATCC VR-571B / DSM 19440 / HAR-13), this protein is Large ribosomal subunit protein bL32.